The primary structure comprises 263 residues: N-acyl homoserine lactonase AttM (263 aa).

Positions 103, 105, 107, 108, 180, 202, and 247 each coordinate Zn(2+).

This sequence belongs to the metallo-beta-lactamase superfamily. It depends on Zn(2+) as a cofactor.

It catalyses the reaction an N-acyl-L-homoserine lactone + H2O = an N-acyl-L-homoserine + H(+). The protein is N-acyl homoserine lactonase AttM (attM) of Rhizobium radiobacter (Agrobacterium tumefaciens).